We begin with the raw amino-acid sequence, 40 residues long: Large ribosomal subunit protein bL36 (40 aa).

This sequence belongs to the bacterial ribosomal protein bL36 family.

In Corynebacterium kroppenstedtii (strain DSM 44385 / JCM 11950 / CIP 105744 / CCUG 35717), this protein is Large ribosomal subunit protein bL36.